The primary structure comprises 1176 residues: Pesticidal crystal protein Cry1Aa (1176 aa).

It belongs to the delta endotoxin family.

In terms of biological role, promotes colloidosmotic lysis by binding to the midgut epithelial cells of many lepidopteran larvae. This Bacillus thuringiensis subsp. aizawai protein is Pesticidal crystal protein Cry1Aa (cry1Aa).